Consider the following 186-residue polypeptide: UPF0301 protein Swoo_1337 (186 aa).

It belongs to the UPF0301 (AlgH) family.

The sequence is that of UPF0301 protein Swoo_1337 from Shewanella woodyi (strain ATCC 51908 / MS32).